Reading from the N-terminus, the 122-residue chain is Small ribosomal subunit protein uS13 (122 aa).

The segment at 93–122 (RLSLPVRGQRTKTNSRTRKGKRKTVAGKKK) is disordered. Positions 101–122 (QRTKTNSRTRKGKRKTVAGKKK) are enriched in basic residues.

The protein belongs to the universal ribosomal protein uS13 family. As to quaternary structure, part of the 30S ribosomal subunit. Forms a loose heterodimer with protein S19. Forms two bridges to the 50S subunit in the 70S ribosome.

Its function is as follows. Located at the top of the head of the 30S subunit, it contacts several helices of the 16S rRNA. In the 70S ribosome it contacts the 23S rRNA (bridge B1a) and protein L5 of the 50S subunit (bridge B1b), connecting the 2 subunits; these bridges are implicated in subunit movement. Contacts the tRNAs in the A and P-sites. This Chlamydia pneumoniae (Chlamydophila pneumoniae) protein is Small ribosomal subunit protein uS13.